Here is a 111-residue protein sequence, read N- to C-terminus: Prothymosin alpha-A (111 aa).

The interval 1–111 is disordered; sequence MSDTAVDASV…IKKQKTDEDD (111 aa). Residues 9-42 show a composition bias toward basic and acidic residues; the sequence is SVEKTTKDLKAKEKEVVEEAENGKDKPTNGKAEN. Composition is skewed to acidic residues over residues 43-81 and 90-100; these read EENG…DEVE and EDDEDDDDDDV. Residues 101 to 111 show a composition bias toward basic and acidic residues; sequence EIKKQKTDEDD.

Belongs to the pro/parathymosin family.

Its subcellular location is the nucleus. The sequence is that of Prothymosin alpha-A (ptma-a) from Xenopus laevis (African clawed frog).